The chain runs to 389 residues: Fructose-1,6-bisphosphate aldolase/phosphatase (389 aa).

Aspartate 17 functions as the Proton acceptor; for FBP phosphatase activity in the catalytic mechanism. Residues aspartate 17, histidine 24, aspartate 57, and aspartate 58 each coordinate Mg(2+). Histidine 24 lines the beta-D-fructose 1,6-bisphosphate pocket. Histidine 24 is a dihydroxyacetone phosphate binding site. Tyrosine 95 is a binding site for beta-D-fructose 1,6-bisphosphate. Mg(2+) is bound at residue glutamine 99. 108–109 is a beta-D-fructose 1,6-bisphosphate binding site; sequence GN. Aspartate 136 contributes to the Mg(2+) binding site. Lysine 137 serves as a coordination point for beta-D-fructose 1,6-bisphosphate. A dihydroxyacetone phosphate-binding site is contributed by lysine 137. Tyrosine 233 acts as the Proton donor/acceptor; for FBP aldolase activity in catalysis. Mg(2+) is bound by residues lysine 236, aspartate 237, and aspartate 238. Lysine 236 (schiff-base intermediate with DHAP; for FBP aldolase activity) is an active-site residue. Beta-D-fructose 1,6-bisphosphate contacts are provided by residues 246-247, arginine 270, aspartate 291, and tyrosine 352; that span reads QS. Arginine 270 and aspartate 291 together coordinate dihydroxyacetone phosphate.

Belongs to the FBP aldolase/phosphatase family. As to quaternary structure, homooctamer; dimer of tetramers. It depends on Mg(2+) as a cofactor.

It catalyses the reaction beta-D-fructose 1,6-bisphosphate + H2O = beta-D-fructose 6-phosphate + phosphate. It carries out the reaction beta-D-fructose 1,6-bisphosphate = D-glyceraldehyde 3-phosphate + dihydroxyacetone phosphate. The protein operates within carbohydrate biosynthesis; gluconeogenesis. In terms of biological role, catalyzes two subsequent steps in gluconeogenesis: the aldol condensation of dihydroxyacetone phosphate (DHAP) and glyceraldehyde-3-phosphate (GA3P) to fructose-1,6-bisphosphate (FBP), and the dephosphorylation of FBP to fructose-6-phosphate (F6P). The sequence is that of Fructose-1,6-bisphosphate aldolase/phosphatase from Methanocaldococcus jannaschii (strain ATCC 43067 / DSM 2661 / JAL-1 / JCM 10045 / NBRC 100440) (Methanococcus jannaschii).